The following is a 347-amino-acid chain: 4-hydroxy-2-oxovalerate aldolase (347 aa).

The Pyruvate carboxyltransferase domain maps to 2 to 252 (ILISDATLRD…DTRTTFERVM (251 aa)). 10-11 (RD) lines the substrate pocket. Position 11 (Asp11) interacts with Mn(2+). The Proton acceptor role is filled by His14. Substrate is bound by residues Ser164 and His191. Residues His191 and His193 each coordinate Mn(2+).

The protein belongs to the 4-hydroxy-2-oxovalerate aldolase family.

It carries out the reaction (S)-4-hydroxy-2-oxopentanoate = acetaldehyde + pyruvate. The sequence is that of 4-hydroxy-2-oxovalerate aldolase (mhpE) from Burkholderia pseudomallei (strain K96243).